A 466-amino-acid chain; its full sequence is MNASRLPGFNDTSQDQPYPTSSEWFDGSNCSWVDAVSWGCNVTINGTSTNATSTDVTSFVLMAVTSVVLALIILATIVGNVFVIAAIIIERNLQNVANYLVASLAVADLMVACLVMPLGAVYEVSQGWILGPELCDMWTSSDVLCSSASILHLVAIATDRYWAVTDVDYIHIRNEKRIFTMIVLVWGAALVVSLAPQLGWKDPDYLARITQQQKCLVSQDLAYQIFATMSTFYVPLAVILILYWKIFQTARRRIRRRRDPPPPRPTSADGATPSGRPVQSARDRRFVKKRFLNLKKCNQRTRAETLAAALLLTEGQSTSTVDTLDEEPRTTAFTINEKVPPSVSPEKSSSTVTNGSKPERAIVPAPTHREKKESLEAKRERKAAKTLAIITGAFVFCWLPFFIMALVMPICQTCVISDYLASFFLWLGYFNSTLNPVIYTIFSPDFRQAFARILFGTHRRRRYKKF.

Residues 1–21 are disordered; it reads MNASRLPGFNDTSQDQPYPTS. Residues 1-66 lie on the Extracellular side of the membrane; it reads MNASRLPGFN…TSFVLMAVTS (66 aa). N-linked (GlcNAc...) asparagine glycosylation is found at N2, N10, N29, N41, N45, and N50. Polar residues predominate over residues 10-21; the sequence is NDTSQDQPYPTS. A helical transmembrane segment spans residues 67–89; sequence VVLALIILATIVGNVFVIAAIII. The Cytoplasmic segment spans residues 90–99; the sequence is ERNLQNVANY. The chain crosses the membrane as a helical span at residues 100–121; that stretch reads LVASLAVADLMVACLVMPLGAV. Over 122–136 the chain is Extracellular; sequence YEVSQGWILGPELCD. The cysteines at positions 135 and 215 are disulfide-linked. The chain crosses the membrane as a helical span at residues 137–158; it reads MWTSSDVLCSSASILHLVAIAT. The Cytoplasmic segment spans residues 159–177; that stretch reads DRYWAVTDVDYIHIRNEKR. A helical transmembrane segment spans residues 178-200; the sequence is IFTMIVLVWGAALVVSLAPQLGW. Residues 201 to 228 are Extracellular-facing; it reads KDPDYLARITQQQKCLVSQDLAYQIFAT. Residues 229–250 form a helical membrane-spanning segment; that stretch reads MSTFYVPLAVILILYWKIFQTA. The Cytoplasmic segment spans residues 251-386; that stretch reads RRRIRRRRDP…AKRERKAAKT (136 aa). 2 disordered regions span residues 255–282 and 339–360; these read RRRR…QSAR and VPPS…KPER. Low complexity predominate over residues 339–353; it reads VPPSVSPEKSSSTVT. The helical transmembrane segment at 387 to 410 threads the bilayer; that stretch reads LAIITGAFVFCWLPFFIMALVMPI. Over 411-419 the chain is Extracellular; the sequence is CQTCVISDY. A helical transmembrane segment spans residues 420–442; it reads LASFFLWLGYFNSTLNPVIYTIF. The Cytoplasmic portion of the chain corresponds to 443–466; sequence SPDFRQAFARILFGTHRRRRYKKF.

The protein belongs to the G-protein coupled receptor 1 family.

It localises to the cell membrane. Functionally, this is a receptor for 5-hydroxytryptamine (serotonin), a biogenic hormone that function as a neurotransmitter, a hormone, and a mitogen. The chain is 5-hydroxytryptamine receptor from Heliothis virescens (Tobacco budworm moth).